Consider the following 204-residue polypeptide: ATP-dependent Clp protease proteolytic subunit 1 (204 aa).

Ser97 (nucleophile) is an active-site residue. Residue His122 is part of the active site.

Belongs to the peptidase S14 family. As to quaternary structure, fourteen ClpP subunits assemble into 2 heptameric rings which stack back to back to give a disk-like structure with a central cavity, resembling the structure of eukaryotic proteasomes.

Its subcellular location is the cytoplasm. It catalyses the reaction Hydrolysis of proteins to small peptides in the presence of ATP and magnesium. alpha-casein is the usual test substrate. In the absence of ATP, only oligopeptides shorter than five residues are hydrolyzed (such as succinyl-Leu-Tyr-|-NHMec, and Leu-Tyr-Leu-|-Tyr-Trp, in which cleavage of the -Tyr-|-Leu- and -Tyr-|-Trp bonds also occurs).. Cleaves peptides in various proteins in a process that requires ATP hydrolysis. Has a chymotrypsin-like activity. Plays a major role in the degradation of misfolded proteins. The sequence is that of ATP-dependent Clp protease proteolytic subunit 1 from Nostoc sp. (strain PCC 7120 / SAG 25.82 / UTEX 2576).